The primary structure comprises 350 residues: Glycosyltransferase 8 domain-containing protein 2 (350 aa).

Topologically, residues 1–6 (MALLRK) are cytoplasmic. Residues 7–24 (INQVLLFLLIVTLCGILY) traverse the membrane as a helical; Signal-anchor for type II membrane protein segment. The Lumenal portion of the chain corresponds to 25–349 (KKVHKGTMLR…AGIFKLHHPN (325 aa)). Asn234 carries an N-linked (GlcNAc...) asparagine glycan.

It belongs to the glycosyltransferase 8 family.

Its subcellular location is the membrane. This Bos taurus (Bovine) protein is Glycosyltransferase 8 domain-containing protein 2 (GLT8D2).